A 207-amino-acid chain; its full sequence is 3-isopropylmalate dehydratase small subunit (207 aa).

The protein belongs to the LeuD family. LeuD type 1 subfamily. In terms of assembly, heterodimer of LeuC and LeuD.

It carries out the reaction (2R,3S)-3-isopropylmalate = (2S)-2-isopropylmalate. It participates in amino-acid biosynthesis; L-leucine biosynthesis; L-leucine from 3-methyl-2-oxobutanoate: step 2/4. Functionally, catalyzes the isomerization between 2-isopropylmalate and 3-isopropylmalate, via the formation of 2-isopropylmaleate. This is 3-isopropylmalate dehydratase small subunit (leuD) from Buchnera aphidicola subsp. Pterocomma populeum.